Reading from the N-terminus, the 205-residue chain is Probable GTP-binding protein EngB (205 aa).

An EngB-type G domain is found at 27–201 (TGIEIAFAGR…AAKLDFWFSP (175 aa)). GTP is bound by residues 35–42 (GRSNAGKS), 62–66 (GRTQL), 80–83 (DLPG), 147–150 (TKAD), and 180–182 (FSA). Mg(2+) contacts are provided by Ser-42 and Thr-64.

The protein belongs to the TRAFAC class TrmE-Era-EngA-EngB-Septin-like GTPase superfamily. EngB GTPase family. It depends on Mg(2+) as a cofactor.

Functionally, necessary for normal cell division and for the maintenance of normal septation. This Haemophilus influenzae (strain PittEE) protein is Probable GTP-binding protein EngB.